We begin with the raw amino-acid sequence, 632 residues long: MSSLAVRDPAMDRSLRSVFVGNIPYEATEEQLKDIFSEVGSVVSFRLVYDRETGKPKGYGFCEYQDQETALSAMRNLNGREFSGRALRVDNAASEKNKEELKSLGPAAPIIDSPYGDPIDPEDAPESITRAVASLPPEQMFELMKQMKLCVQNSHQEARNMLLQNPQLAYALLQAQVVMRIMDPEIALKILHRKIHVTPLIPGKSQPVSGPGPGGPGPSGPGGPGPGPAPGLCPGPNVMLNQQNPPAPQPQHLPRRPVKDIPPLMQTSIQGGIPAPGPIPAAVPGPGPGSLTPGGAMQPQVGMPVVGPVPLERGQMQISDPRPPMPRGPMPSGGIPPRGLLGDAPNDPRGGTLLSVTGEVEPRGYMGPPHQGPPMHHGHDNRGPASHDMRGGPLAADPRMLIGEPRGPMIDQRGLPMDGRGGRESRGMETRPMETEVLEPRGMERRMETCAMETRGMDARGLEMRGPGPSSRGPMTGGIQGPGPINMGAGGPQGPRQVPNIAGVGNPGGTMQGAGIQGGGMQGAGMQGGGMQGAGMQGGGMQGAGMQAGMQGASMQGGMQGAGMQGASKQGGGQPSSFSPGQSQVTPQDQEKAALIMQVLQLTADQIAMLPPEQRQSILILKEQIQKSTGAS.

Residues 16–94 enclose the RRM domain; that stretch reads RSVFVGNIPY…RALRVDNAAS (79 aa). 2 disordered regions span residues 201–296 and 365–433; these read IPGK…PGGA and YMGP…TRPM. Residues 213 to 233 are compositionally biased toward pro residues; it reads PGGPGPSGPGGPGPGPAPGLC. The segment covering 234–244 has biased composition (low complexity); sequence PGPNVMLNQQN. Residues 275–287 are compositionally biased toward pro residues; it reads APGPIPAAVPGPG. The span at 365–375 shows a compositional bias: low complexity; sequence YMGPPHQGPPM. Basic and acidic residues-rich tracts occupy residues 377–390 and 420–433; these read HGHDNRGPASHDMR and RGGRESRGMETRPM. One copy of the 1-1; approximate repeat lies at 428–432; the sequence is METRP. The segment at 428-466 is 8 X 5 AA tandem repeats of M-E-T-R-[AG]; it reads METRPMETEVLEPRGMERRMETCAMETRGMDARGLEMRG. One copy of the 1-2; approximate repeat lies at 433 to 437; that stretch reads METEV. The stretch at 438 to 442 is one 1-3; approximate repeat; that stretch reads LEPRG. The 1-4; approximate repeat unit spans residues 443–446; it reads MERR. The 1-5; approximate repeat unit spans residues 447 to 451; the sequence is METCA. The 1-6 repeat unit spans residues 452-456; sequence METRG. The stretch at 457–461 is one 1-7; approximate repeat; sequence MDARG. One copy of the 1-8; approximate repeat lies at 462-466; it reads LEMRG. One copy of the 2-1; approximate repeat lies at 508 to 512; that stretch reads GGTMQ. Residues 508–565 form a 12 X 5 AA tandem repeats of G-[AT]-G-[MI]-Q region; sequence GGTMQGAGIQGGGMQGAGMQGGGMQGAGMQGGGMQGAGMQAGMQGASMQGGMQGAGMQ. Residues 513–517 form a 2-2 repeat; sequence GAGIQ. Residues 518-522 form a 2-3; approximate repeat; it reads GGGMQ. Over residues 519–543 the composition is skewed to gly residues; the sequence is GGMQGAGMQGGGMQGAGMQGGGMQG. The tract at residues 519–590 is disordered; sequence GGMQGAGMQG…GQSQVTPQDQ (72 aa). The stretch at 523 to 527 is one 2-4 repeat; the sequence is GAGMQ. One copy of the 2-5; approximate repeat lies at 528 to 532; that stretch reads GGGMQ. One copy of the 2-6 repeat lies at 533-537; it reads GAGMQ. The 2-7; approximate repeat unit spans residues 538-542; sequence GGGMQ. The 2-8 repeat unit spans residues 543–547; that stretch reads GAGMQ. Over residues 544 to 557 the composition is skewed to low complexity; that stretch reads AGMQAGMQGASMQG. Residues 548–551 form a 2-9; approximate repeat; the sequence is AGMQ. A 2-10; approximate repeat occupies 552-556; it reads GASMQ. The 2-11; approximate repeat unit spans residues 557-560; it reads GGMQ. Residues 558–574 are compositionally biased toward gly residues; the sequence is GMQGAGMQGASKQGGGQ. One copy of the 2-12 repeat lies at 561–565; the sequence is GAGMQ. Over residues 575 to 584 the composition is skewed to low complexity; it reads PSSFSPGQSQ. Serine 579 carries the phosphoserine modification.

As to expression, expressed in testes, where it is restricted to pachytene spermatocytes and spermatids, and in the brain (at protein level).

The protein resides in the nucleus. May play a significant role in AAUAAA-independent mRNA polyadenylation in germ cells. Directly involved in the binding to pre-mRNAs. The polypeptide is Cleavage stimulation factor subunit 2 tau variant (Cstf2t) (Mus musculus (Mouse)).